Consider the following 612-residue polypeptide: MPEYRSRTSTAGRNMAGARALWRATGMKDGDFHKPIIAIANSFTQFVPGHVHLKDLGQLVAREIEKVGGVAKEFNTIAVDDGIAMGHDGMLYSLPSREIIADSVEYMANAHCADALVCISNCDKITPGMLMAALRLNIPVVFVSGGPMEAGKTKLSEHKLDLVDAMVIAADESASDEKVAEFERSACPTCGSCSGMFTANSMNCLTEALGLSLPGNGSTLATHADREQLFLRAGRLIVELCHRWYGGEDPTALPRGIATQAAFANAMTLDIAMGGSTNTILHLLAAAQEAEVDFDLTHIDALSRRVPQLCKVAPNTPKYHMEDVHRAGGVYGILGELARGGLLDTGVPTVHSRSLADAIARWDVAVSSDSSVQDFFRAGPAGISTQVAFSQATRWPTLDVDRAEGCIRSVKHAYSAEGGLAVLRGNLAVDGCVVKTAGVDESIHVFEGNARVYESQDAAVAGILADEVKAGDVVVIRYEGPKGGPGMQEMLYPTSYLKSKGLGKQCALLTDGRFSGGTSGLSIGHVSPEAASGGTIGLVEDGDRIRIDIPARRIDLLLDEATLAQRRADADARGWKPRAPRPRKVTSALKAYALLATSADKGAVRNTALLGD.

Mg(2+) is bound at residue Asp-81. Residue Cys-122 coordinates [2Fe-2S] cluster. Positions 123 and 124 each coordinate Mg(2+). Lys-124 is modified (N6-carboxylysine). Residue Cys-193 coordinates [2Fe-2S] cluster. Residue Glu-489 coordinates Mg(2+). The active-site Proton acceptor is Ser-515.

The protein belongs to the IlvD/Edd family. As to quaternary structure, homodimer. It depends on [2Fe-2S] cluster as a cofactor. Mg(2+) serves as cofactor.

The enzyme catalyses (2R)-2,3-dihydroxy-3-methylbutanoate = 3-methyl-2-oxobutanoate + H2O. It carries out the reaction (2R,3R)-2,3-dihydroxy-3-methylpentanoate = (S)-3-methyl-2-oxopentanoate + H2O. It participates in amino-acid biosynthesis; L-isoleucine biosynthesis; L-isoleucine from 2-oxobutanoate: step 3/4. It functions in the pathway amino-acid biosynthesis; L-valine biosynthesis; L-valine from pyruvate: step 3/4. In terms of biological role, functions in the biosynthesis of branched-chain amino acids. Catalyzes the dehydration of (2R,3R)-2,3-dihydroxy-3-methylpentanoate (2,3-dihydroxy-3-methylvalerate) into 2-oxo-3-methylpentanoate (2-oxo-3-methylvalerate) and of (2R)-2,3-dihydroxy-3-methylbutanoate (2,3-dihydroxyisovalerate) into 2-oxo-3-methylbutanoate (2-oxoisovalerate), the penultimate precursor to L-isoleucine and L-valine, respectively. In Stenotrophomonas maltophilia (strain R551-3), this protein is Dihydroxy-acid dehydratase.